The sequence spans 274 residues: Ribosomal RNA small subunit methyltransferase A (274 aa).

Residues histidine 15, leucine 17, glycine 42, glutamate 64, aspartate 89, and asparagine 108 each coordinate S-adenosyl-L-methionine.

It belongs to the class I-like SAM-binding methyltransferase superfamily. rRNA adenine N(6)-methyltransferase family. RsmA subfamily.

It is found in the cytoplasm. It catalyses the reaction adenosine(1518)/adenosine(1519) in 16S rRNA + 4 S-adenosyl-L-methionine = N(6)-dimethyladenosine(1518)/N(6)-dimethyladenosine(1519) in 16S rRNA + 4 S-adenosyl-L-homocysteine + 4 H(+). Its function is as follows. Specifically dimethylates two adjacent adenosines (A1518 and A1519) in the loop of a conserved hairpin near the 3'-end of 16S rRNA in the 30S particle. May play a critical role in biogenesis of 30S subunits. The polypeptide is Ribosomal RNA small subunit methyltransferase A (Prochlorococcus marinus (strain AS9601)).